The chain runs to 533 residues: Basal body-orientation factor 1 (533 aa).

Positions 1-30 (MPAKDKRKDKRKDKRKGKNKGKEPKKIIKS) are disordered. The segment covering 7–19 (RKDKRKDKRKGKN) has biased composition (basic residues). The span at 20–30 (KGKEPKKIIKS) shows a compositional bias: basic and acidic residues. Coiled coils occupy residues 34-207 (AIER…EAEK) and 246-368 (LKEA…VEQF). The tract at residues 277-533 (VKEKIMQLTQ…PQGLQDSDIA (257 aa)) is interaction with MNS1 and ODF2. Residues 507–517 (QQAPVSDSNRM) show a composition bias toward polar residues. The interval 507–533 (QQAPVSDSNRMVSPDVIPQGLQDSDIA) is disordered.

The protein belongs to the BBOF1 family. In terms of assembly, interacts with MNS1 and ODF2. Expressed exclusively in the testis and predominantly expressed in male germ cells.

It localises to the cytoplasm. It is found in the cytoskeleton. Its subcellular location is the cilium basal body. The protein resides in the flagellum axoneme. In terms of biological role, plays an essential role in sperm motility and male fertility by stabilizing the sperm flagellar axonemal structure. May be required for the stability of ODF2 and MANS1 proteins. Dispensable for the assembly and function of motile cilia. The chain is Basal body-orientation factor 1 from Mus musculus (Mouse).